The sequence spans 434 residues: dTDP-D-glucose 4,6-dehydratase (434 aa).

Residue T134 coordinates substrate. D135 (proton donor) is an active-site residue. Catalysis depends on proton acceptor residues E136 and Y169. The segment covering 286–309 (NNNNNNNNNNNNNNNNNNNNNNNN) has biased composition (low complexity). Positions 286-310 (NNNNNNNNNNNNNNNNNNNNNNNND) are disordered.

This sequence belongs to the NAD(P)-dependent epimerase/dehydratase family. dTDP-glucose dehydratase subfamily. NAD(+) is required as a cofactor.

It carries out the reaction dTDP-alpha-D-glucose = dTDP-4-dehydro-6-deoxy-alpha-D-glucose + H2O. The sequence is that of dTDP-D-glucose 4,6-dehydratase (tgds) from Dictyostelium discoideum (Social amoeba).